We begin with the raw amino-acid sequence, 134 residues long: UPF0412 protein YaaI (134 aa).

Positions 1 to 23 (MRSVLTISAGLLFGLALSSVAHA) are cleaved as a signal peptide.

Belongs to the UPF0412 family.

In Salmonella agona (strain SL483), this protein is UPF0412 protein YaaI.